The primary structure comprises 397 residues: Meiotic driver wtf28 (397 aa).

Disordered stretches follow at residues 1-41 (MKNK…GNTL) and 65-102 (NWNK…SGTA). Residues 11–29 (SMDELSTKNDNEIDLEKGP) are compositionally biased toward basic and acidic residues. Transmembrane regions (helical) follow at residues 108-128 (FLIK…PAVC), 145-165 (WVYF…LWCF), 175-195 (VTVI…AQCV), 205-225 (CIKV…VGLY), 230-250 (DLVV…FGCV), 266-286 (SSIS…IWTL), 290-310 (LFGL…TKGL), 320-340 (ATGY…LFFY), and 357-377 (NGIA…ANAI).

This sequence belongs to the WTF family. As to quaternary structure, homomer. Forms protein aggregates. The two isoforms can interact with each other and with themselves. High sequence similarity is required for their interaction.

The protein resides in the spore membrane. The protein localises to the vacuole membrane. It is found in the ascus epiplasm. It localises to the cytoplasm. Its subcellular location is the endoplasmic reticulum membrane. Promotes unequal transmission of alleles from the parental zygote to progeny spores by acting as poison/antidote system where the poison and antidote proteins are produced from the same locus; the poison component is trans-acting and targets all spores within an ascus whereas the antidote component is spore-specific, leading to poisoning of all progeny that do not inherit the allele. In terms of biological role, localizes isoform 2 to the vacuole thereby facilitating its degradation. Its function is as follows. Forms toxic aggregates that disrupt spore maturation. In Schizosaccharomyces kambucha (Fission yeast), this protein is Meiotic driver wtf28.